Consider the following 350-residue polypeptide: 4-hydroxy-3-methylbut-2-enyl diphosphate reductase (350 aa).

Residue cysteine 19 participates in [4Fe-4S] cluster binding. The (2E)-4-hydroxy-3-methylbut-2-enyl diphosphate site is built by histidine 48 and histidine 84. Residues histidine 48 and histidine 84 each coordinate dimethylallyl diphosphate. Histidine 48 and histidine 84 together coordinate isopentenyl diphosphate. [4Fe-4S] cluster is bound at residue cysteine 106. Histidine 134 is a binding site for (2E)-4-hydroxy-3-methylbut-2-enyl diphosphate. Histidine 134 lines the dimethylallyl diphosphate pocket. An isopentenyl diphosphate-binding site is contributed by histidine 134. Residue glutamate 136 is the Proton donor of the active site. Threonine 175 is a (2E)-4-hydroxy-3-methylbut-2-enyl diphosphate binding site. Residue cysteine 205 coordinates [4Fe-4S] cluster. (2E)-4-hydroxy-3-methylbut-2-enyl diphosphate is bound by residues serine 233, serine 234, asparagine 235, and serine 278. Positions 233, 234, 235, and 278 each coordinate dimethylallyl diphosphate. Positions 233, 234, 235, and 278 each coordinate isopentenyl diphosphate.

It belongs to the IspH family. Requires [4Fe-4S] cluster as cofactor.

The catalysed reaction is isopentenyl diphosphate + 2 oxidized [2Fe-2S]-[ferredoxin] + H2O = (2E)-4-hydroxy-3-methylbut-2-enyl diphosphate + 2 reduced [2Fe-2S]-[ferredoxin] + 2 H(+). It catalyses the reaction dimethylallyl diphosphate + 2 oxidized [2Fe-2S]-[ferredoxin] + H2O = (2E)-4-hydroxy-3-methylbut-2-enyl diphosphate + 2 reduced [2Fe-2S]-[ferredoxin] + 2 H(+). It functions in the pathway isoprenoid biosynthesis; dimethylallyl diphosphate biosynthesis; dimethylallyl diphosphate from (2E)-4-hydroxy-3-methylbutenyl diphosphate: step 1/1. The protein operates within isoprenoid biosynthesis; isopentenyl diphosphate biosynthesis via DXP pathway; isopentenyl diphosphate from 1-deoxy-D-xylulose 5-phosphate: step 6/6. Functionally, catalyzes the conversion of 1-hydroxy-2-methyl-2-(E)-butenyl 4-diphosphate (HMBPP) into a mixture of isopentenyl diphosphate (IPP) and dimethylallyl diphosphate (DMAPP). Acts in the terminal step of the DOXP/MEP pathway for isoprenoid precursor biosynthesis. The polypeptide is 4-hydroxy-3-methylbut-2-enyl diphosphate reductase (Brucella anthropi (strain ATCC 49188 / DSM 6882 / CCUG 24695 / JCM 21032 / LMG 3331 / NBRC 15819 / NCTC 12168 / Alc 37) (Ochrobactrum anthropi)).